The chain runs to 367 residues: Cycloaraneosene synthase sdnA (367 aa).

An N-terminal signal peptide occupies residues 1–24; it reads MSLYGLFTLATSYLPSVGGGAALA. 3 residues coordinate Mg(2+): Asp-115, Asn-260, and Ser-264. The DDXXD motif signature appears at 115–119; that stretch reads DDQFD. N-linked (GlcNAc...) asparagine glycosylation occurs at Asn-276.

It belongs to the terpene synthase family. Mg(2+) serves as cofactor.

It catalyses the reaction (2E,6E,10E)-geranylgeranyl diphosphate = cycloaraneosene + diphosphate. The protein operates within antibiotic biosynthesis. Its function is as follows. Cycloaraneosene synthase; part of the gene cluster that mediates the biosynthesis of sordarin and hypoxysordarin, glycoside antibiotics with a unique tetracyclic diterpene aglycone structure. First, the geranylgeranyl diphosphate synthase sdnC constructs GGDP from farnesyl diphosphate and isopentenyl diphosphate. The diterpene cyclase sdnA then catalyzes the cyclization of GGDP to afford cycloaraneosene. Cycloaraneosene is then hydroxylated four times by the putative cytochrome P450 monooxygenases sdnB, sdnE, sdnF and sdnH to give a hydroxylated cycloaraneosene derivative such as cycloaraneosene-8,9,13,19-tetraol. Although the order of the hydroxylations is unclear, at least C8, C9 and C13 of the cycloaraneosene skeleton are hydroxylated before the sordaricin formation. Dehydration of the 13-hydroxy group of the hydroxylated cycloaraneosene derivative might be catalyzed by an unassigned hypothetical protein such as sdnG and sdnP to construct the cyclopentadiene moiety. The FAD-dependent oxidoreductase sdnN is proposed to catalyze the oxidation at C9 of the hydroxylated cycloaraneosene derivative and also catalyze the Baeyer-Villiger oxidation to give the lactone intermediate. The presumed lactone intermediate would be hydrolyzed to give an acrolein moiety and a carboxylate moiety. Then, [4+2]cycloaddition would occur between the acrolein moiety and the cyclopentadiene moiety to give sordaricin. SdnN might also be involved in the [4+2]cycloaddition after the hypothesized oxidation to accommodate the oxidized product and prompt the [4+2]cycloaddition. GDP-6-deoxy-D-altrose may be biosynthesized from GDP-D-mannose by the putative GDP-mannose-4,6-dehydratase sdnI and the short-chain dehydrogenase sdnK. The glycosyltransferase sdnJ catalyzes the attachment of 6-deoxy-D-altrose onto the 19-hydroxy group of sordaricin to give 4'-O-demethylsordarin. The methyltransferase sdnD would complete the biosynthesis of sordarin. Sordarin can be further modified into hypoxysordarin. The unique acyl chain at the 3'-hydroxy group of hypoxysordarin would be constructed by an iterative type I PKS sdnO and the trans-acting polyketide methyltransferase sdnL. SdnL would be responsible for the introduction of an alpha-methyl group of the polyketide chain. Alternatively, the beta-lactamase-like protein sdnR might be responsible for the cleavage and transfer of the polyketide chain from the PKS sdnO to sordarin. Two putative cytochrome P450 monooxygenases, sdnQ and sdnT, might catalyze the epoxidations of the polyketide chain to complete the biosynthesis of hypoxysordarin. Transcriptional regulators sdnM and sdnS are presumably encoded for the transcriptional regulation of the expression of the sdn gene cluster. The protein is Cycloaraneosene synthase sdnA of Sordaria araneosa (Pleurage araneosa).